The sequence spans 130 residues: Mini-ribonuclease 3 (130 aa).

The active site involves aspartate 19. The tract at residues 69 to 91 is disordered; it reads EQDVVRRGRNAKGHGAPKSADPA.

The protein belongs to the MrnC RNase family. As to quaternary structure, homodimer. Mg(2+) serves as cofactor.

It localises to the cytoplasm. Its function is as follows. Involved in correct processing of both the 5' and 3' ends of 23S rRNA precursor. Processes 30S rRNA precursor transcript even in absence of ribonuclease 3 (Rnc); Rnc processes 30S rRNA into smaller rRNA precursors. The chain is Mini-ribonuclease 3 from Symbiobacterium thermophilum (strain DSM 24528 / JCM 14929 / IAM 14863 / T).